A 395-amino-acid polypeptide reads, in one-letter code: Pyridinium-3,5-bisthiocarboxylic acid mononucleotide nickel insertion protein (395 aa).

It belongs to the LarC family.

It carries out the reaction Ni(II)-pyridinium-3,5-bisthiocarboxylate mononucleotide = pyridinium-3,5-bisthiocarboxylate mononucleotide + Ni(2+). Involved in the biosynthesis of a nickel-pincer cofactor ((SCS)Ni(II) pincer complex). Binds Ni(2+), and functions in nickel delivery to pyridinium-3,5-bisthiocarboxylic acid mononucleotide (P2TMN), to form the mature cofactor. Is thus probably required for the activation of nickel-pincer cofactor-dependent enzymes. The polypeptide is Pyridinium-3,5-bisthiocarboxylic acid mononucleotide nickel insertion protein (Staphylococcus epidermidis (strain ATCC 35984 / DSM 28319 / BCRC 17069 / CCUG 31568 / BM 3577 / RP62A)).